Reading from the N-terminus, the 323-residue chain is ADP-L-glycero-D-manno-heptose-6-epimerase (323 aa).

Residues Phe-10 to Ile-11, Asp-31 to Asn-32, Lys-38, Lys-53, Glu-75 to Ser-79, and Asn-92 contribute to the NADP(+) site. The Proton acceptor role is filled by Tyr-139. Lys-143 contacts NADP(+). Asn-168 provides a ligand contact to substrate. Residues Val-169 and Lys-177 each coordinate NADP(+). The active-site Proton acceptor is the Lys-177. Residues Asp-179, Lys-186, Phe-200 to Tyr-203, Arg-213, and Tyr-277 each bind substrate.

The protein belongs to the NAD(P)-dependent epimerase/dehydratase family. HldD subfamily. In terms of assembly, homopentamer. Requires NADP(+) as cofactor.

The catalysed reaction is ADP-D-glycero-beta-D-manno-heptose = ADP-L-glycero-beta-D-manno-heptose. Its pathway is nucleotide-sugar biosynthesis; ADP-L-glycero-beta-D-manno-heptose biosynthesis; ADP-L-glycero-beta-D-manno-heptose from D-glycero-beta-D-manno-heptose 7-phosphate: step 4/4. Its function is as follows. Catalyzes the interconversion between ADP-D-glycero-beta-D-manno-heptose and ADP-L-glycero-beta-D-manno-heptose via an epimerization at carbon 6 of the heptose. The sequence is that of ADP-L-glycero-D-manno-heptose-6-epimerase from Hydrogenovibrio crunogenus (strain DSM 25203 / XCL-2) (Thiomicrospira crunogena).